The following is an 83-amino-acid chain: Cell division topological specificity factor (83 aa).

Belongs to the MinE family.

Functionally, prevents the cell division inhibition by proteins MinC and MinD at internal division sites while permitting inhibition at polar sites. This ensures cell division at the proper site by restricting the formation of a division septum at the midpoint of the long axis of the cell. This Pseudoalteromonas atlantica (strain T6c / ATCC BAA-1087) protein is Cell division topological specificity factor.